The primary structure comprises 315 residues: tRNA pseudouridine synthase B (315 aa).

Catalysis depends on Asp-47, which acts as the Nucleophile.

The protein belongs to the pseudouridine synthase TruB family. Type 1 subfamily.

It carries out the reaction uridine(55) in tRNA = pseudouridine(55) in tRNA. Responsible for synthesis of pseudouridine from uracil-55 in the psi GC loop of transfer RNAs. This Shewanella amazonensis (strain ATCC BAA-1098 / SB2B) protein is tRNA pseudouridine synthase B.